Consider the following 20-residue polypeptide: Phospholipase A2 homolog P-elapitoxin-Aa1a gamma chain (20 aa).

Belongs to the phospholipase A2 family. Group I subfamily. As to quaternary structure, heterotrimer of alpha, beta and gamma chains, each related to PLA2. Glycosylated. As to expression, expressed by the venom gland.

It is found in the secreted. In terms of biological role, heterotrimer: Snake venom phospholipase A2 (PLA2) that has presynaptic neurotoxicity. Inhibits nerve-evoked twitch contractions but not responses to cholinergic agonists acetylcholine and carbachol and to depolarizing agonist KCl. Causes a fade in tetanic contractions. Displays a triphasic mode of action with depression, enhancement and blockade of neurotransmission. Does not display myotoxic activity such as changes in baseline muscle tension or inhibition of directly stimulated muscle twitches. All subunits are necessary for maximum toxicity. Its function is as follows. Monomer: the gamma chain has no significant enzymatic activity and is not toxic by itself. This is Phospholipase A2 homolog P-elapitoxin-Aa1a gamma chain from Acanthophis antarcticus (Common death adder).